Consider the following 500-residue polypeptide: Archaeal-type glutamate synthase [NADPH] (500 aa).

4Fe-4S ferredoxin-type domains are found at residues 7–38 (SKFI…YDED) and 40–69 (DQIK…VRNN). 8 residues coordinate [4Fe-4S] cluster: Cys-18, Cys-21, Cys-24, Cys-28, Cys-49, Cys-52, Cys-55, and Cys-59.

The protein belongs to the glutamate synthase family. Requires FMN as cofactor.

The catalysed reaction is 2 L-glutamate + NADP(+) = L-glutamine + 2-oxoglutarate + NADPH + H(+). This chain is Archaeal-type glutamate synthase [NADPH], found in Dehalococcoides mccartyi (strain ATCC BAA-2266 / KCTC 15142 / 195) (Dehalococcoides ethenogenes (strain 195)).